A 131-amino-acid polypeptide reads, in one-letter code: uncharacterized protein (131 aa).

Transmembrane regions (helical) follow at residues R13–I35, L60–C79, and L100–T119.

It localises to the membrane. This is an uncharacterized protein from Saccharomyces cerevisiae (strain ATCC 204508 / S288c) (Baker's yeast).